Here is a 317-residue protein sequence, read N- to C-terminus: Dehydrogenase/reductase SDR family member 12 (317 aa).

Residues Ser-50 and Ile-52 each coordinate NAD(+). A substrate-binding site is contributed by Ser-175. 3 residues coordinate NAD(+): Tyr-201, Lys-205, and Thr-234. Tyr-201 serves as the catalytic Proton acceptor.

It belongs to the short-chain dehydrogenases/reductases (SDR) family.

Putative oxidoreductase. This chain is Dehydrogenase/reductase SDR family member 12, found in Homo sapiens (Human).